We begin with the raw amino-acid sequence, 343 residues long: S-adenosylmethionine:tRNA ribosyltransferase-isomerase (343 aa).

Belongs to the QueA family. As to quaternary structure, monomer.

The protein resides in the cytoplasm. The catalysed reaction is 7-aminomethyl-7-carbaguanosine(34) in tRNA + S-adenosyl-L-methionine = epoxyqueuosine(34) in tRNA + adenine + L-methionine + 2 H(+). Its pathway is tRNA modification; tRNA-queuosine biosynthesis. Its function is as follows. Transfers and isomerizes the ribose moiety from AdoMet to the 7-aminomethyl group of 7-deazaguanine (preQ1-tRNA) to give epoxyqueuosine (oQ-tRNA). The protein is S-adenosylmethionine:tRNA ribosyltransferase-isomerase of Enterococcus faecalis (strain ATCC 700802 / V583).